We begin with the raw amino-acid sequence, 430 residues long: MASSLLEPSLAAIALVILLASVSLSRKKRPAAPEPQGLSVLGNLFDIPKRASSIIYLALGKPYNTLTKRAVSQLQGYTPGSHIDATSHSPRVFRLPNLEETFSVFPDHGLNPNYTSARTDSRAWINQYTKVVCGPKMVAFMNNCEFELSNSHCYPYAGYKGLKATMDLTNILWLYDEYTDTGSGAEAVKAAGIVARALREPDYDDGTWVCRMMKSFKQNHIDKAGPGVARRFIDNFCNYVEVVGREAELREKNEVLDIPNYVTFRRETSAVRTCFDLVEYCLDLDLPQYVHDDPVFISGYNAGMDLVFWANDLVSYNMEQSKGHSGANVVTVIMKSKGVDLQTAVDFLGGYCEALTAQLLEAKRILQARSDAAYSRDVVRLMDAFGDWVRGNVAWSFETERYFGKENKRVKETLLVELKEPFVGALALKE.

An N-terminal signal peptide occupies residues 1 to 25 (MASSLLEPSLAAIALVILLASVSLS). Asn-113 carries N-linked (GlcNAc...) asparagine glycosylation. Mg(2+) is bound by residues Asp-176, Asn-311, Ser-315, and Glu-319. The short motif at 176 to 180 (DEYTD) is the DDXXD motif element. Residues Arg-401 and Tyr-402 each contribute to the (2E,6E)-farnesyl diphosphate site.

The protein belongs to the terpene synthase family. It depends on Mg(2+) as a cofactor.

The enzyme catalyses (2E,6E)-farnesyl diphosphate = viridiflorene + diphosphate. Functionally, terpene cyclase that catalyzes the cyclization of farnesyl diphosphate (FPP) to viridiflorene and viridiflorol. The chain is Sesquiterpene synthase Agr5 from Cyclocybe aegerita (Black poplar mushroom).